The sequence spans 852 residues: Translation initiation factor IF-2 (852 aa).

Residues 1–240 form a disordered region; that stretch reads MEDKNKTIKE…KTSSDKRDFS (240 aa). Positions 78 to 90 are enriched in basic and acidic residues; the sequence is KEVKYEESSRKQD. The span at 106–120 shows a compositional bias: polar residues; sequence VRPSGDSSYPVSRSP. Residues 150–200 show a composition bias toward gly residues; it reads RGPGQGGGYQGNRGPGQGGGYQGNRGPGQQTGPGNRFGGSGPGNRSGGPGG. Residues 227-240 show a composition bias toward basic and acidic residues; sequence HDKEKTSSDKRDFS. A tr-type G domain is found at 347–516; it reads NRPPVVTIMG…LLQAEVMDLK (170 aa). Residues 356-363 are G1; the sequence is GHVDHGKT. A GTP-binding site is contributed by 356–363; it reads GHVDHGKT. Positions 381–385 are G2; the sequence is GITQH. Residues 402-405 form a G3 region; that stretch reads DTPG. GTP is bound by residues 402-406 and 456-459; these read DTPGH and NKID. The tract at residues 456-459 is G4; it reads NKID. The tract at residues 492-494 is G5; sequence SAR.

It belongs to the TRAFAC class translation factor GTPase superfamily. Classic translation factor GTPase family. IF-2 subfamily.

The protein localises to the cytoplasm. One of the essential components for the initiation of protein synthesis. Protects formylmethionyl-tRNA from spontaneous hydrolysis and promotes its binding to the 30S ribosomal subunits. Also involved in the hydrolysis of GTP during the formation of the 70S ribosomal complex. This Leptospira borgpetersenii serovar Hardjo-bovis (strain JB197) protein is Translation initiation factor IF-2.